Here is a 398-residue protein sequence, read N- to C-terminus: Cathepsin E (398 aa).

A signal peptide spans 1 to 21 (MKPLFVLLLLLLLLDLAQAQG). Residues 22–58 (VLHRVPLRRHQSLRKKLRAQGQLSDFWRSHNLDMIEF) constitute a propeptide, activation peptide. Residues 80–394 (YFGTVSIGSP…DRGNNQVGLA (315 aa)) form the Peptidase A1 domain. Residue Asn-92 is glycosylated (N-linked (GlcNAc...) asparagine). The active site involves Asp-98. Cystine bridges form between Cys-111/Cys-116 and Cys-274/Cys-278. The active site involves Asp-283.

This sequence belongs to the peptidase A1 family. In terms of assembly, homodimer; disulfide-linked. Glycosylated. The nature of the carbohydrate chain varies between cell types. In brain microglia, the proenzyme contains a high mannose-type oligosaccharide, while the mature enzyme contains a complex-type oligosaccharide. In stomach and spleen, the mature enzyme contains a high mannose-type oligosaccharide. In erythrocyte membranes, the mature enzyme contains a complex-type oligosaccharide. In terms of tissue distribution, expressed abundantly in lymphocytes and macrophages of the thymus and spleen, and in the M cells of the intestine. In the brain, expression is limited to reactive microglial cells, the large pyrimidial neurons in the cerebral cortex, the CA1 and CA3 pyrimidial neurons of the hippocampus, the large neurons of the neostriatum, and the Purkinje neurons of the cerebellum.

It localises to the endosome. It carries out the reaction Similar to cathepsin D, but slightly broader specificity.. Its function is as follows. May have a role in immune function. Probably involved in the processing of antigenic peptides during MHC class II-mediated antigen presentation. May play a role in activation-induced lymphocyte depletion in the thymus, and in neuronal degeneration and glial cell activation in the brain. The polypeptide is Cathepsin E (Ctse) (Rattus norvegicus (Rat)).